Consider the following 1682-residue polypeptide: Cilia- and flagella-associated protein 43 (1682 aa).

WD repeat units lie at residues 168–207 (NPGMDVSQMSFNPMNWHQMCLSSSSAMSVWTIERSNQEHH), 262–305 (PKDD…VTVL), 315–354 (DGAPLINPLTLVYQKDGILASGIDGVIYSFIIKDSKYQVK), 358–397 (EFDGPVTHLVFSPSYKMLLIQTDKGSVYIYTFGAEMPLDK), 488–527 (LSQSPVKIVTYDQRGIFLLVGTEEGNIFVIDARPSKSFQI), and 697–738 (SHQG…ANIA). Residues 767–790 (RESTNEQQEETTESQKHLNSDSSE) form a disordered region. 2 coiled-coil regions span residues 926-960 (KERTEEELQELSKVMQQKKTEIECLKLRKEIVEVQ) and 1171-1223 (SEDE…HLKR).

Belongs to the CFAP43 family. Expressed in testis. Expressed in the lung, brain, oviduct and nasal cavity.

Its subcellular location is the cell projection. It is found in the cilium. The protein resides in the flagellum. It localises to the cytoplasm. The protein localises to the cytoskeleton. Its subcellular location is the flagellum axoneme. It is found in the cilium axoneme. Functionally, flagellar protein involved in sperm flagellum axoneme organization and function. Involved in the regulation of the beating frequency of motile cilia on the epithelial cells of the respiratory tract. In Mus musculus (Mouse), this protein is Cilia- and flagella-associated protein 43.